Here is a 633-residue protein sequence, read N- to C-terminus: Chitinase 2 (633 aa).

In terms of domain architecture, GH18 spans 151–602 (PKLSAYITDW…NAAREGLGYV (452 aa)). Chitin is bound by residues 275–276 (QN) and 306–309 (GGWS). Catalysis depends on glutamate 349, which acts as the Proton donor. Residues tyrosine 350, 422–425 (MSYD), and tryptophan 582 each bind chitin.

This sequence belongs to the glycosyl hydrolase 18 family. Semipurified toxin complex consists of at least YenA1-YenA2-YenB-YenC1-YenC2-Chi1-Chi2. The Yen-TC:K9 subcomplex is about 26 nm tall and 22 nm in diameter with 5-fold symmetry and 5 copies of YenA1, YenA2, Chi1 and Chi2; the chitinase subunits may be solvent accessible on the exterior the complex. The Yen-TC:K9 subcomplex has no insecticidal activity. The native complex with additional YenB, YenC1 and YenC2 subunits is 16 nm taller and is insecticidal; the toxicity-conferring subunits are present at about 1 copy each.

It is found in the secreted. The enzyme catalyses Random endo-hydrolysis of N-acetyl-beta-D-glucosaminide (1-&gt;4)-beta-linkages in chitin and chitodextrins.. Its activity is regulated as follows. Toxin complex is secreted when grown at 25 degrees Celsius or less; at higher temperatures the proteins are present intracellularly but not secreted. Its function is as follows. Part of an orally active toxin complex (TC) with strong insecticidal effects on larvae of the Coleoptera Costelytra zealandica, Acrossidius tasmania and Adoryphorus couloni and some Lepidoptera larvae. The TC has an endochitinase activity. This subunit might aid infection by degradation of the larval peritrophic membrane. In Yersinia entomophaga, this protein is Chitinase 2.